Reading from the N-terminus, the 84-residue chain is uncharacterized protein (84 aa).

Composition is skewed to basic residues over residues Met-1–His-15 and His-67–Phe-84. Disordered regions lie at residues Met-1–Thr-22 and Thr-64–Phe-84.

This is an uncharacterized protein from Dictyostelium discoideum (Social amoeba).